We begin with the raw amino-acid sequence, 265 residues long: Phosphatidylserine decarboxylase proenzyme (265 aa).

The active-site Schiff-base intermediate with substrate; via pyruvic acid is Ser183. A Pyruvic acid (Ser); by autocatalysis modification is found at Ser183. The tract at residues 216–246 (TAPQTESEPESEPALQTAPVETAANPSAEQR) is disordered.

This sequence belongs to the phosphatidylserine decarboxylase family. PSD-A subfamily. Heterodimer of a large membrane-associated beta subunit and a small pyruvoyl-containing alpha subunit. It depends on pyruvate as a cofactor. Post-translationally, is synthesized initially as an inactive proenzyme. Formation of the active enzyme involves a self-maturation process in which the active site pyruvoyl group is generated from an internal serine residue via an autocatalytic post-translational modification. Two non-identical subunits are generated from the proenzyme in this reaction, and the pyruvate is formed at the N-terminus of the alpha chain, which is derived from the carboxyl end of the proenzyme. The post-translation cleavage follows an unusual pathway, termed non-hydrolytic serinolysis, in which the side chain hydroxyl group of the serine supplies its oxygen atom to form the C-terminus of the beta chain, while the remainder of the serine residue undergoes an oxidative deamination to produce ammonia and the pyruvoyl prosthetic group on the alpha chain.

It localises to the cell membrane. The enzyme catalyses a 1,2-diacyl-sn-glycero-3-phospho-L-serine + H(+) = a 1,2-diacyl-sn-glycero-3-phosphoethanolamine + CO2. Its pathway is phospholipid metabolism; phosphatidylethanolamine biosynthesis; phosphatidylethanolamine from CDP-diacylglycerol: step 2/2. Catalyzes the formation of phosphatidylethanolamine (PtdEtn) from phosphatidylserine (PtdSer). The protein is Phosphatidylserine decarboxylase proenzyme of Neisseria meningitidis serogroup B (strain ATCC BAA-335 / MC58).